Consider the following 506-residue polypeptide: F-box protein At4g02760 (506 aa).

Residues 115-161 enclose the F-box domain; the sequence is TSWPLLPELTIKVFSMLDTKSLMQASACCTMFNKCAMDRVCYSHIDL. Positions 452–506 are disordered; sequence TFVAEFRSPSPSESDVRSPSPSSSSDSSSSSDSSSSSSSGESSDESGTEEEEDED. Positions 459–492 are enriched in low complexity; sequence SPSPSESDVRSPSPSSSSDSSSSSDSSSSSSSGE. A compositionally biased stretch (acidic residues) spans 493–506; the sequence is SSDESGTEEEEDED.

This Arabidopsis thaliana (Mouse-ear cress) protein is F-box protein At4g02760.